Consider the following 105-residue polypeptide: uncharacterized protein (105 aa).

This is an uncharacterized protein from Paracoccus denitrificans.